Here is a 261-residue protein sequence, read N- to C-terminus: Trifolitoxin immunity protein (261 aa).

Its function is as follows. Required for TFX resistance. The sequence is that of Trifolitoxin immunity protein (tfxG) from Rhizobium leguminosarum bv. trifolii.